A 457-amino-acid chain; its full sequence is tRNA-2-methylthio-N(6)-dimethylallyladenosine synthase (457 aa).

Residues 3–120 (KKVYVKTFGC…LPQMIDARRA (118 aa)) enclose the MTTase N-terminal domain. [4Fe-4S] cluster contacts are provided by Cys12, Cys49, Cys83, Cys157, Cys161, and Cys164. The region spanning 143-377 (RVEGPSAFVS…QATIEENVAR (235 aa)) is the Radical SAM core domain. One can recognise a TRAM domain in the interval 380–447 (QSMVGKVERI…PHSLRGELVI (68 aa)).

Belongs to the methylthiotransferase family. MiaB subfamily. As to quaternary structure, monomer. Requires [4Fe-4S] cluster as cofactor.

It localises to the cytoplasm. It carries out the reaction N(6)-dimethylallyladenosine(37) in tRNA + (sulfur carrier)-SH + AH2 + 2 S-adenosyl-L-methionine = 2-methylsulfanyl-N(6)-dimethylallyladenosine(37) in tRNA + (sulfur carrier)-H + 5'-deoxyadenosine + L-methionine + A + S-adenosyl-L-homocysteine + 2 H(+). In terms of biological role, catalyzes the methylthiolation of N6-(dimethylallyl)adenosine (i(6)A), leading to the formation of 2-methylthio-N6-(dimethylallyl)adenosine (ms(2)i(6)A) at position 37 in tRNAs that read codons beginning with uridine. In Burkholderia cenocepacia (strain ATCC BAA-245 / DSM 16553 / LMG 16656 / NCTC 13227 / J2315 / CF5610) (Burkholderia cepacia (strain J2315)), this protein is tRNA-2-methylthio-N(6)-dimethylallyladenosine synthase.